Consider the following 469-residue polypeptide: Sorting and assembly machinery component 50 homolog (469 aa).

The POTRA domain occupies 45–125 (VVVQHVHFDG…LDVTFEVTEL (81 aa)). At K255 the chain carries N6-methyllysine.

This sequence belongs to the SAM50/omp85 family. As to quaternary structure, associates with the mitochondrial contact site and cristae organizing system (MICOS) complex, composed of at least MICOS10/MIC10, CHCHD3/MIC19, CHCHD6/MIC25, APOOL/MIC27, IMMT/MIC60, APOO/MIC23/MIC26 and QIL1/MIC13. This complex was also known under the names MINOS or MitOS complex. The MICOS complex associates with mitochondrial outer membrane proteins SAMM50, MTX1 and MTX2 (together described as components of the mitochondrial outer membrane sorting assembly machinery (SAM) complex) and DNAJC11, mitochondrial inner membrane protein TMEM11 and with HSPA9. The MICOS and SAM complexes together with DNAJC11 are part of a large protein complex spanning both membranes termed the mitochondrial intermembrane space bridging (MIB) complex. Interacts with IMMT/MIC60. Interacts with CHCHD3/MIC19. Interacts with ARMC1.

It localises to the mitochondrion outer membrane. It is found in the cytoplasm. The protein localises to the mitochondrion. Functionally, plays a crucial role in the maintenance of the structure of mitochondrial cristae and the proper assembly of the mitochondrial respiratory chain complexes. Required for the assembly of TOMM40 into the TOM complex. The sequence is that of Sorting and assembly machinery component 50 homolog (SAMM50) from Bos taurus (Bovine).